A 335-amino-acid polypeptide reads, in one-letter code: Pyruvate dehydrogenase E1 component subunit beta (335 aa).

Glu-60 is a binding site for thiamine diphosphate. K(+)-binding residues include Ala-161, Ile-162, and Asn-166.

Heterodimer of an alpha and a beta chain. Requires thiamine diphosphate as cofactor.

Its subcellular location is the plastid. The protein localises to the chloroplast. It catalyses the reaction N(6)-[(R)-lipoyl]-L-lysyl-[protein] + pyruvate + H(+) = N(6)-[(R)-S(8)-acetyldihydrolipoyl]-L-lysyl-[protein] + CO2. The pyruvate dehydrogenase complex catalyzes the overall conversion of pyruvate to acetyl-CoA and CO(2). It contains multiple copies of three enzymatic components: pyruvate dehydrogenase (E1), dihydrolipoamide acetyltransferase (E2) and lipoamide dehydrogenase (E3). This Chlorokybus atmophyticus (Soil alga) protein is Pyruvate dehydrogenase E1 component subunit beta (pdhB).